The following is a 932-amino-acid chain: Isoleucine--tRNA ligase (932 aa).

Residues 58 to 68 (PYANGNLHLGH) carry the 'HIGH' region motif. Glu-567 contacts L-isoleucyl-5'-AMP. Residues 608-612 (KMSKS) carry the 'KMSKS' region motif. Lys-611 contributes to the ATP binding site. 4 residues coordinate Zn(2+): Cys-895, Cys-898, Cys-915, and Cys-918.

This sequence belongs to the class-I aminoacyl-tRNA synthetase family. IleS type 1 subfamily. Monomer. It depends on Zn(2+) as a cofactor.

It localises to the cytoplasm. The enzyme catalyses tRNA(Ile) + L-isoleucine + ATP = L-isoleucyl-tRNA(Ile) + AMP + diphosphate. Catalyzes the attachment of isoleucine to tRNA(Ile). As IleRS can inadvertently accommodate and process structurally similar amino acids such as valine, to avoid such errors it has two additional distinct tRNA(Ile)-dependent editing activities. One activity is designated as 'pretransfer' editing and involves the hydrolysis of activated Val-AMP. The other activity is designated 'posttransfer' editing and involves deacylation of mischarged Val-tRNA(Ile). This chain is Isoleucine--tRNA ligase, found in Azoarcus sp. (strain BH72).